The primary structure comprises 173 residues: Large ribosomal subunit protein uL16 (173 aa).

Belongs to the universal ribosomal protein uL16 family.

This is Large ribosomal subunit protein uL16 from Methanococcus aeolicus (strain ATCC BAA-1280 / DSM 17508 / OCM 812 / Nankai-3).